Reading from the N-terminus, the 386-residue chain is Aspartate carbamoyltransferase 1, chloroplastic (386 aa).

The N-terminal 39 residues, 1-39, are a transit peptide targeting the chloroplast; it reads MTVASMLSSNSMNVGVSNPKMSSKTSACCLLNRPWPSSC. The carbamoyl phosphate site is built by Arg-132 and Thr-133. UMP contacts are provided by Arg-132 and Thr-133. L-aspartate is bound at residue Lys-162. Residues Arg-183, His-211, and Gln-214 each contribute to the carbamoyl phosphate site. Residues Arg-183 and His-211 each coordinate UMP. UMP contacts are provided by Arg-244 and Arg-306. Positions 244 and 306 each coordinate L-aspartate. Carbamoyl phosphate-binding residues include Leu-346 and Pro-347.

Belongs to the aspartate/ornithine carbamoyltransferase superfamily. ATCase family. Homotrimer.

Its subcellular location is the plastid. The protein localises to the chloroplast. The catalysed reaction is carbamoyl phosphate + L-aspartate = N-carbamoyl-L-aspartate + phosphate + H(+). It participates in pyrimidine metabolism; UMP biosynthesis via de novo pathway; (S)-dihydroorotate from bicarbonate: step 2/3. Its activity is regulated as follows. Feedback inhibited by UMP. Functionally, catalyzes the condensation of carbamoyl phosphate and aspartate to form carbamoyl aspartate and inorganic phosphate, the committed step in the de novo pyrimidine nucleotide biosynthesis pathway. This chain is Aspartate carbamoyltransferase 1, chloroplastic (PYRB1), found in Pisum sativum (Garden pea).